A 472-amino-acid polypeptide reads, in one-letter code: Adenosylhomocysteinase (472 aa).

Substrate contacts are provided by threonine 61, aspartate 136, and glutamate 196. 197 to 199 (TTT) provides a ligand contact to NAD(+). Substrate contacts are provided by lysine 226 and aspartate 230. NAD(+) contacts are provided by residues asparagine 231, 260–265 (GYGDVG), glutamate 283, asparagine 318, 339–341 (IGH), and asparagine 384.

It belongs to the adenosylhomocysteinase family. NAD(+) is required as a cofactor.

Its subcellular location is the cytoplasm. It carries out the reaction S-adenosyl-L-homocysteine + H2O = L-homocysteine + adenosine. It participates in amino-acid biosynthesis; L-homocysteine biosynthesis; L-homocysteine from S-adenosyl-L-homocysteine: step 1/1. Functionally, may play a key role in the regulation of the intracellular concentration of adenosylhomocysteine. The protein is Adenosylhomocysteinase of Cupriavidus necator (strain ATCC 17699 / DSM 428 / KCTC 22496 / NCIMB 10442 / H16 / Stanier 337) (Ralstonia eutropha).